Reading from the N-terminus, the 369-residue chain is tRNA(Met) cytidine acetate ligase (369 aa).

ATP contacts are provided by residues 7–20 (VAEF…HKYL), Gly-96, Asn-152, and Arg-175.

It belongs to the TmcAL family.

It is found in the cytoplasm. It carries out the reaction cytidine(34) in elongator tRNA(Met) + acetate + ATP = N(4)-acetylcytidine(34) in elongator tRNA(Met) + AMP + diphosphate. Catalyzes the formation of N(4)-acetylcytidine (ac(4)C) at the wobble position of elongator tRNA(Met), using acetate and ATP as substrates. First activates an acetate ion to form acetyladenylate (Ac-AMP) and then transfers the acetyl group to tRNA to form ac(4)C34. The polypeptide is tRNA(Met) cytidine acetate ligase (Streptococcus agalactiae serotype III (strain NEM316)).